The following is a 290-amino-acid chain: Acetylglutamate kinase (290 aa).

Substrate-binding positions include 64-65, arginine 86, and asparagine 183; that span reads GG.

This sequence belongs to the acetylglutamate kinase family. ArgB subfamily.

Its subcellular location is the cytoplasm. It carries out the reaction N-acetyl-L-glutamate + ATP = N-acetyl-L-glutamyl 5-phosphate + ADP. Its pathway is amino-acid biosynthesis; L-arginine biosynthesis; N(2)-acetyl-L-ornithine from L-glutamate: step 2/4. Functionally, catalyzes the ATP-dependent phosphorylation of N-acetyl-L-glutamate. This Halothermothrix orenii (strain H 168 / OCM 544 / DSM 9562) protein is Acetylglutamate kinase.